A 481-amino-acid polypeptide reads, in one-letter code: MADMPSGESCTSPLELFNSIATQGELVRSLKAGNAPKDEIDSAVKMLLSLKMSYKAAMGEEYKAGCPPGNPTAGRNCDSDATKASEDFVDPWTVRTSSAKGIDYDKLIVQFGSSKIDKELINRIERATGQRPHRFLRRGIFFSHRDMNQILDAYENKKPFYLYTGRGPSSEAMHLGHLVPFIFTKWLQDVFNVPLVIQMSDDEKYLWKDLTLEQAYSYTVENAKDIIACGFDINKTFIFSDLEYMGQSPGFYRNVVKIQKHVTFNQVKGIFGFTDSDCIGKISFPAVQAAPSFSNSFPKIFRDRTDIQCLIPCAIDQDPYFRMTRDVAPRIGHPKPALLHSTFFPALQGAQTKMSASDPNSSIFLTDTAKQIKSKVNKHAFSGGRDTVEEHRQFGGNCEVDVSFMYLTFFLEDDDRLEQIRKDYTSGAMLTGELKKTLIDVLQPLIAEHQARRKAVTEETVKEFMTPRQLSFHFQCFCFDT.

The WHEP-TRS domain occupies Ser-12–Pro-68. Lys-158 is modified (N6-succinyllysine). The 'HIGH' region signature appears at Pro-168–His-177. A 'KMSKS' region motif is present at residues Lys-353–Ser-357. Ser-355 is modified (phosphoserine).

Belongs to the class-I aminoacyl-tRNA synthetase family. As to quaternary structure, homodimer. Interacts with oxidized form of GAPDH. Proteolytic cleavage generates 2 forms; T1-TrpRS and T2-TrpRS. Isoform 2 is widely expressed, isoform 1 is found only in embryonic stem cells.

Its subcellular location is the cytoplasm. It catalyses the reaction tRNA(Trp) + L-tryptophan + ATP = L-tryptophyl-tRNA(Trp) + AMP + diphosphate + H(+). Catalyzes the attachment of tryptophan to tRNA(Trp) in a two-step reaction: tryptophan is first activated by ATP to form Trp-AMP and then transferred to the acceptor end of the tRNA(Trp). Could also possess an angiostatic activity. This chain is Tryptophan--tRNA ligase, cytoplasmic, found in Mus musculus (Mouse).